A 182-amino-acid polypeptide reads, in one-letter code: Gamma-crystallin N (182 aa).

3 Beta/gamma crystallin 'Greek key' domains span residues 6–46 (GKIT…HVES), 47–89 (GAWV…RPVG), and 95–136 (FRLE…KVYG). The tract at residues 153 to 182 (LSSSLQSDQGPEEATTKPATTQPPFLTANL) is disordered. A compositionally biased stretch (polar residues) spans 169-182 (KPATTQPPFLTANL).

It belongs to the beta/gamma-crystallin family. In terms of assembly, monomer. Not specifically expressed in eye.

In Homo sapiens (Human), this protein is Gamma-crystallin N.